Here is a 449-residue protein sequence, read N- to C-terminus: UDP-N-acetylmuramate--L-alanine ligase (449 aa).

121-127 (GAHGKSS) provides a ligand contact to ATP.

Belongs to the MurCDEF family.

The protein localises to the cytoplasm. The enzyme catalyses UDP-N-acetyl-alpha-D-muramate + L-alanine + ATP = UDP-N-acetyl-alpha-D-muramoyl-L-alanine + ADP + phosphate + H(+). It functions in the pathway cell wall biogenesis; peptidoglycan biosynthesis. Functionally, cell wall formation. The polypeptide is UDP-N-acetylmuramate--L-alanine ligase (Helicobacter pylori (strain J99 / ATCC 700824) (Campylobacter pylori J99)).